Consider the following 23-residue polypeptide: Malate dehydrogenase (23 aa).

Asn-7 serves as a coordination point for NAD(+). A substrate-binding site is contributed by Arg-23.

Belongs to the LDH/MDH superfamily. MDH type 1 family. In terms of assembly, homodimer.

It catalyses the reaction (S)-malate + NAD(+) = oxaloacetate + NADH + H(+). This Pseudotsuga menziesii (Douglas-fir) protein is Malate dehydrogenase.